Here is a 426-residue protein sequence, read N- to C-terminus: 3-phosphoshikimate 1-carboxyvinyltransferase (426 aa).

3-phosphoshikimate is bound by residues K22, S23, and R27. Phosphoenolpyruvate is bound at residue K22. Phosphoenolpyruvate is bound by residues G96 and R124. The 3-phosphoshikimate site is built by S170, S171, Q172, S198, D314, N337, and K341. Q172 lines the phosphoenolpyruvate pocket. Residue D314 is the Proton acceptor of the active site. Phosphoenolpyruvate contacts are provided by R345, R387, and K412.

Belongs to the EPSP synthase family. As to quaternary structure, monomer.

The protein resides in the cytoplasm. It catalyses the reaction 3-phosphoshikimate + phosphoenolpyruvate = 5-O-(1-carboxyvinyl)-3-phosphoshikimate + phosphate. It participates in metabolic intermediate biosynthesis; chorismate biosynthesis; chorismate from D-erythrose 4-phosphate and phosphoenolpyruvate: step 6/7. Its function is as follows. Catalyzes the transfer of the enolpyruvyl moiety of phosphoenolpyruvate (PEP) to the 5-hydroxyl of shikimate-3-phosphate (S3P) to produce enolpyruvyl shikimate-3-phosphate and inorganic phosphate. This is 3-phosphoshikimate 1-carboxyvinyltransferase from Photobacterium damsela subsp. piscicida (Pasteurella piscicida).